Reading from the N-terminus, the 234-residue chain is DNA repair protein RecO (234 aa).

Belongs to the RecO family.

Its function is as follows. Involved in DNA repair and RecF pathway recombination. The polypeptide is DNA repair protein RecO (Hamiltonella defensa subsp. Acyrthosiphon pisum (strain 5AT)).